The chain runs to 231 residues: Endonuclease NucS (231 aa).

It belongs to the NucS endonuclease family.

Its subcellular location is the cytoplasm. Functionally, cleaves both 3' and 5' ssDNA extremities of branched DNA structures. This is Endonuclease NucS from Arthrobacter sp. (strain FB24).